The primary structure comprises 470 residues: Putative bifunctional phosphatase/peptidyl-prolyl cis-trans isomerase (470 aa).

D22 serves as the catalytic Nucleophile. Positions 22, 24, and 221 each coordinate Mg(2+). A PPIase cyclophilin-type domain is found at 286 to 468 (TGPKVTIKTN…EDVIIETIEV (183 aa)).

This sequence in the C-terminal section; belongs to the cyclophilin-type PPIase family. PPIL1 subfamily. It depends on Mg(2+) as a cofactor.

It carries out the reaction [protein]-peptidylproline (omega=180) = [protein]-peptidylproline (omega=0). In terms of biological role, PPIases accelerate the folding of proteins. It catalyzes the cis-trans isomerization of proline imidic peptide bonds in oligopeptides. This Streptococcus pyogenes serotype M6 (strain ATCC BAA-946 / MGAS10394) protein is Putative bifunctional phosphatase/peptidyl-prolyl cis-trans isomerase.